We begin with the raw amino-acid sequence, 226 residues long: Ribonuclease 3 (226 aa).

The 123-residue stretch at 6–128 (FNKLQKKMGY…IIGGIFLDSN (123 aa)) folds into the RNase III domain. E41 provides a ligand contact to Mg(2+). D45 is a catalytic residue. Mg(2+) contacts are provided by N114 and E117. E117 is an active-site residue. The region spanning 155-225 (DPKTRLQEYL…AKQALLLFNI (71 aa)) is the DRBM domain.

This sequence belongs to the ribonuclease III family. In terms of assembly, homodimer. Mg(2+) serves as cofactor.

It is found in the cytoplasm. The catalysed reaction is Endonucleolytic cleavage to 5'-phosphomonoester.. Digests double-stranded RNA. Involved in the processing of primary rRNA transcript to yield the immediate precursors to the large and small rRNAs (23S and 16S). Processes some mRNAs, and tRNAs when they are encoded in the rRNA operon. Processes pre-crRNA and tracrRNA of type II CRISPR loci if present in the organism. The chain is Ribonuclease 3 from Wigglesworthia glossinidia brevipalpis.